We begin with the raw amino-acid sequence, 132 residues long: Small ribosomal subunit protein uS8c (132 aa).

Belongs to the universal ribosomal protein uS8 family. In terms of assembly, part of the 30S ribosomal subunit.

The protein resides in the plastid. It localises to the chloroplast. In terms of biological role, one of the primary rRNA binding proteins, it binds directly to 16S rRNA central domain where it helps coordinate assembly of the platform of the 30S subunit. The sequence is that of Small ribosomal subunit protein uS8c (rps8) from Ceratophyllum demersum (Rigid hornwort).